The following is a 144-amino-acid chain: Large ribosomal subunit protein uL11 (144 aa).

This sequence belongs to the universal ribosomal protein uL11 family. In terms of assembly, part of the ribosomal stalk of the 50S ribosomal subunit. Interacts with L10 and the large rRNA to form the base of the stalk. L10 forms an elongated spine to which L12 dimers bind in a sequential fashion forming a multimeric L10(L12)X complex. Post-translationally, one or more lysine residues are methylated.

Its function is as follows. Forms part of the ribosomal stalk which helps the ribosome interact with GTP-bound translation factors. The polypeptide is Large ribosomal subunit protein uL11 (Nocardia farcinica (strain IFM 10152)).